The following is a 263-amino-acid chain: H-2 class II histocompatibility antigen, A-S beta chain (263 aa).

A signal peptide spans 1 to 27 (MALQIPSLLLSAAVVVLMVLSSPGTEG). A beta-1 region spans residues 28–120 (GDSERHFVFQ…VETHTSLRRL (93 aa)). Topologically, residues 28–224 (GDSERHFVFQ…RAQSESARSK (197 aa)) are extracellular. 2 disulfides stabilise this stretch: Cys-42/Cys-104 and Cys-143/Cys-199. Asn-46 carries an N-linked (GlcNAc...) asparagine glycan. Residues 121-214 (EQPNVVISLS…SLKSPITVEW (94 aa)) form a beta-2 region. Residues 123 to 211 (PNVVISLSRT…EHPSLKSPIT (89 aa)) enclose the Ig-like C1-type domain. The connecting peptide stretch occupies residues 215 to 224 (RAQSESARSK). A helical membrane pass occupies residues 225 to 245 (MLSGIGGCVLGVIFLGLGLFI). The Cytoplasmic portion of the chain corresponds to 246–263 (RHRSQKGPRGPPPAGLLQ).

Belongs to the MHC class II family. Ubiquitinated in immature dendritic cells leading to down-regulation of MHC class II.

Its subcellular location is the membrane. This Mus musculus (Mouse) protein is H-2 class II histocompatibility antigen, A-S beta chain (H2-Ab1).